A 425-amino-acid chain; its full sequence is Serine--tRNA ligase (425 aa).

230–232 (TAE) is a binding site for L-serine. 261 to 263 (RSE) is a binding site for ATP. Glu284 lines the L-serine pocket. 348-351 (EISS) contacts ATP. Residue Ser384 coordinates L-serine.

It belongs to the class-II aminoacyl-tRNA synthetase family. Type-1 seryl-tRNA synthetase subfamily. As to quaternary structure, homodimer. The tRNA molecule binds across the dimer.

It is found in the cytoplasm. It catalyses the reaction tRNA(Ser) + L-serine + ATP = L-seryl-tRNA(Ser) + AMP + diphosphate + H(+). It carries out the reaction tRNA(Sec) + L-serine + ATP = L-seryl-tRNA(Sec) + AMP + diphosphate + H(+). The protein operates within aminoacyl-tRNA biosynthesis; selenocysteinyl-tRNA(Sec) biosynthesis; L-seryl-tRNA(Sec) from L-serine and tRNA(Sec): step 1/1. Its function is as follows. Catalyzes the attachment of serine to tRNA(Ser). Is also able to aminoacylate tRNA(Sec) with serine, to form the misacylated tRNA L-seryl-tRNA(Sec), which will be further converted into selenocysteinyl-tRNA(Sec). This chain is Serine--tRNA ligase, found in Streptococcus pyogenes serotype M4 (strain MGAS10750).